The following is a 107-amino-acid chain: MEDFGFTTALRSESVYIVFRFISSSSLSYNTLSSAFIRLDWIKTPRHRAASRALGIQSNGQICTACPHLSALFGFLSVASCFPSNKDDGLHTRIYFDLEFQPDSAVF.

It is found in the mitochondrion. This is an uncharacterized protein from Arabidopsis thaliana (Mouse-ear cress).